Consider the following 512-residue polypeptide: MEISVASVTVSVAVVVVSWWVWRTLQWVWFKPKMLESYLRRQGLAGTPYTPLVGDLKKNFSMRAEARSKPINLTDDITPRIVPYPLQMLKTHGRTFFTWFGAIPTITIMDPEQITEVLNKVYDFQKAHTFPLGRLIATGVLSYDGDKWAKHRRIINPAFHLEKIKNMVPAFHQSCSEIVCKWDKLVSDKESSCEVDVWPGLVSMTADVISRTAFGSSCVEGQRIFELQAELAQLIIQTVRKAFIPGYSYLPTKGNRRMKAKAREIQVILRGIVNKRLRAREAGEAPNDDLLGILLESNLGQTKGNGMSTEDLMEECKLFYFVGQETTSVLLVWTMVLLSQHQDWQARAREEVKQVFGDKEPDAEGLNQLKVMTMILYEVLRLYPPIPQLSRAIHKEMELGDLTLPGGVLINLPILLVQRDTELWGNDAGEFKPDRFKDGLSKATKNQASFFPFAWGSRICIGQNFALLEAKMAMALILQRFSFELSPSYVHAPYTVFTIHPQFGAPLIMHKL.

A helical transmembrane segment spans residues 2–22 (EISVASVTVSVAVVVVSWWVW). Cys460 is a heme binding site.

The protein belongs to the cytochrome P450 family. Requires heme as cofactor.

It localises to the membrane. This chain is Cytochrome P450 72A11 (CYP72A11), found in Arabidopsis thaliana (Mouse-ear cress).